Reading from the N-terminus, the 512-residue chain is Anaerobic nitric oxide reductase transcription regulator NorR (512 aa).

A Sigma-54 factor interaction domain is found at 190 to 419; that stretch reads MIGESLAMQE…LEHVISRAAV (230 aa). ATP-binding positions include 218-225 and 281-290; these read GETGVGKE and ADNGTLFLDE. Positions 487–506 form a DNA-binding region, H-T-H motif; that stretch reads WAATARALQLDTGNLHRLAK.

The protein operates within nitrogen metabolism; nitric oxide reduction. Its function is as follows. Required for the expression of anaerobic nitric oxide (NO) reductase, acts as a transcriptional activator for at least the norVW operon. Activation also requires sigma-54. The protein is Anaerobic nitric oxide reductase transcription regulator NorR of Aliivibrio fischeri (strain ATCC 700601 / ES114) (Vibrio fischeri).